The following is a 100-amino-acid chain: uncharacterized protein (100 aa).

A helical membrane pass occupies residues I62 to Y82.

The protein resides in the membrane. This is an uncharacterized protein from Dictyostelium discoideum (Social amoeba).